Reading from the N-terminus, the 79-residue chain is Small integral membrane protein 40 (79 aa).

Residues 35 to 55 (FFIFLALFLTLLMLEAAYKLL) form a helical membrane-spanning segment.

The protein localises to the membrane. In Homo sapiens (Human), this protein is Small integral membrane protein 40.